Here is an 887-residue protein sequence, read N- to C-terminus: Alanine--tRNA ligase (887 aa).

Positions 564, 568, 676, and 680 each coordinate Zn(2+).

The protein belongs to the class-II aminoacyl-tRNA synthetase family. Requires Zn(2+) as cofactor.

Its subcellular location is the cytoplasm. The catalysed reaction is tRNA(Ala) + L-alanine + ATP = L-alanyl-tRNA(Ala) + AMP + diphosphate. Catalyzes the attachment of alanine to tRNA(Ala) in a two-step reaction: alanine is first activated by ATP to form Ala-AMP and then transferred to the acceptor end of tRNA(Ala). Also edits incorrectly charged Ser-tRNA(Ala) and Gly-tRNA(Ala) via its editing domain. The polypeptide is Alanine--tRNA ligase (Rhizobium meliloti (strain 1021) (Ensifer meliloti)).